We begin with the raw amino-acid sequence, 164 residues long: uncharacterized protein (164 aa).

Residues 46–66 form a helical membrane-spanning segment; the sequence is FIRPNIYLIIFIIIVLLLLYY. Positions 72–137 form a coiled coil; that stretch reads KADKEKEKLE…YNLNKENLRE (66 aa). The span at 76 to 91 shows a compositional bias: basic and acidic residues; that stretch reads EKEKLEDTDKEFDKST. Residues 76–114 are disordered; the sequence is EKEKLEDTDKEFDKSTNNDTNSKKIYHRQKNSKTLNSSK.

Its subcellular location is the membrane. This is an uncharacterized protein from Acanthamoeba polyphaga mimivirus (APMV).